The sequence spans 253 residues: tRNA pseudouridine synthase A (253 aa).

D52 serves as the catalytic Nucleophile. Y111 is a binding site for substrate.

Belongs to the tRNA pseudouridine synthase TruA family. As to quaternary structure, homodimer.

The enzyme catalyses uridine(38/39/40) in tRNA = pseudouridine(38/39/40) in tRNA. Formation of pseudouridine at positions 38, 39 and 40 in the anticodon stem and loop of transfer RNAs. The polypeptide is tRNA pseudouridine synthase A (Methylobacterium radiotolerans (strain ATCC 27329 / DSM 1819 / JCM 2831 / NBRC 15690 / NCIMB 10815 / 0-1)).